Consider the following 757-residue polypeptide: Probable serine/threonine-protein kinase pknA2 (757 aa).

One can recognise a Protein kinase domain in the interval 14–274 (YRIVRNIAEG…DGAAAAEELS (261 aa)). ATP is bound by residues 20–28 (IAEGGMATV) and K43. D140 (proton acceptor) is an active-site residue. The tract at residues 344–387 (DTGGAADVNPPAPPVAPTTALDSSTPADASAPHKTQIMAQSGSE) is disordered. PASTA domains are found at residues 466–539 (DANA…VVSK), 545–614 (TIPK…TLSK), and 615–681 (GPMP…VISK).

This sequence belongs to the protein kinase superfamily. Ser/Thr protein kinase family.

It carries out the reaction L-seryl-[protein] + ATP = O-phospho-L-seryl-[protein] + ADP + H(+). The enzyme catalyses L-threonyl-[protein] + ATP = O-phospho-L-threonyl-[protein] + ADP + H(+). The polypeptide is Probable serine/threonine-protein kinase pknA2 (pknA2) (Bifidobacterium longum (strain NCC 2705)).